The sequence spans 509 residues: Steroid 17-alpha-hydroxylase/17,20 lyase (509 aa).

Residue Cys445 participates in heme binding.

It belongs to the cytochrome P450 family. It depends on heme as a cofactor.

The protein resides in the membrane. The enzyme catalyses a C21-steroid + reduced [NADPH--hemoprotein reductase] + O2 = a 17alpha-hydroxy-C21-steroid + oxidized [NADPH--hemoprotein reductase] + H2O + H(+). It carries out the reaction 17alpha-hydroxyprogesterone + reduced [NADPH--hemoprotein reductase] + O2 = androst-4-ene-3,17-dione + acetate + oxidized [NADPH--hemoprotein reductase] + H2O + 2 H(+). It catalyses the reaction 17alpha-hydroxypregnenolone + reduced [NADPH--hemoprotein reductase] + O2 = 3beta-hydroxyandrost-5-en-17-one + acetate + oxidized [NADPH--hemoprotein reductase] + H2O + 2 H(+). It participates in lipid metabolism; steroid biosynthesis. In terms of biological role, conversion of pregnenolone and progesterone to their 17-alpha-hydroxylated products and subsequently to dehydroepiandrosterone (DHEA) and androstenedione. Catalyzes both the 17-alpha-hydroxylation and the 17,20-lyase reaction. The chain is Steroid 17-alpha-hydroxylase/17,20 lyase (CYP17A1) from Squalus acanthias (Spiny dogfish).